A 685-amino-acid chain; its full sequence is Mitotic interactor and substrate of PLK1 (685 aa).

Residue Ser78 is modified to Phosphoserine; by CDK1. 2 disordered regions span residues 155-181 (SGTV…STPL) and 207-253 (NKEV…QGKG). Thr172 is subject to Phosphothreonine; by CDK1. Thr179 is modified (phosphothreonine). Ser214 is modified (phosphoserine; by CDK1). Phosphothreonine is present on Thr219. Phosphoserine; by CDK1 is present on Ser284. A Phosphothreonine; by CDK1 modification is found at Thr287. Residues 345 to 499 (GRPSLYVQRD…PWKLPRGSPQ (155 aa)) form a disordered region. Residue Ser348 is modified to Phosphoserine. Basic and acidic residues predominate over residues 355-371 (MVQETQREEDHRREGLH). Phosphothreonine; by CDK1 is present on Thr377. Position 382 is a phosphoserine (Ser382). A compositionally biased stretch (low complexity) spans 392 to 417 (ALSSDSILSPDSILSPAPDARAADPA). 3 positions are modified to phosphoserine; by PLK1: Ser394, Ser395, and Ser397. Ser406 and Ser436 each carry phosphoserine. A compositionally biased stretch (polar residues) spans 454-469 (SGLSTVDTEAATSPKA). Ser477 carries the phosphoserine; by PLK1 modification. Residues 478–488 (ESSGKPMSTKQ) are compositionally biased toward polar residues. Phosphoserine is present on residues Ser547 and Ser549. A coiled-coil region spans residues 551–575 (DLLERERESVLRREREVAEERRNAL). 2 disordered regions span residues 575–607 (LFPE…SYSV) and 629–651 (PVDS…NPSD). Position 581 is a phosphoserine; by PLK1 (Ser581). The residue at position 583 (Thr583) is a Phosphothreonine. Residues 589 to 607 (DQNSRSSSQASGITGSYSV) are compositionally biased toward polar residues. The residue at position 592 (Ser592) is a Phosphoserine; by PLK1. The residue at position 681 (Ser681) is a Phosphoserine.

It belongs to the MISP family. In terms of assembly, associates with F-actin. Interacts with DCTN1; this interaction regulates DCTN1 distribution at the cell cortex. Interacts with PTK2/FAK and MAPRE1. Phosphorylated by CDK1 and PLK1. CDK1 is the priming kinase for PLK1 phosphorylation. Phosphorylation by PLK1 is required for proper spindle orientation at metaphase.

Its subcellular location is the cell junction. It is found in the focal adhesion. The protein resides in the cytoplasm. The protein localises to the cytoskeleton. It localises to the cell cortex. Functionally, plays a role in mitotic spindle orientation and mitotic progression. Regulates the distribution of dynactin at the cell cortex in a PLK1-dependent manner, thus stabilizing cortical and astral microtubule attachments required for proper mitotic spindle positioning. May link microtubules to the actin cytospkeleton and focal adhesions. May be required for directed cell migration and centrosome orientation. May also be necessary for proper stacking of the Golgi apparatus. This is Mitotic interactor and substrate of PLK1 from Pongo abelii (Sumatran orangutan).